Consider the following 253-residue polypeptide: 3-isopropylmalate dehydratase small subunit 3 (253 aa).

The N-terminal 56 residues, 1–56 (MATSQQFLNPTLFKSLASSNKNSCTLCPSPFLQLKSASTIFNYKPLTSSSATIITR), are a transit peptide targeting the chloroplast.

It belongs to the LeuD family. In terms of assembly, heterodimer of the large LEUC/IIL1 subunit and the small LEUD (SSU1, SSU2 or SSU3) subunits. In terms of tissue distribution, expressed in vascular bundles of roots, cotyledons and rosette leaves. Expressed in stem vascular bundles which branche off into lateral inflorescences. Expressed in connective tissues in anthers. In hypocotyls, expressed in parenchyma cells surrounding the vasculature. In rosette leaves, expressed in phloem cells and cells close to the xylem along the vascular bundles. In roots of adult plants, expressed in cells closely associated with the stele. In flowering stalks, expressed in parenchyma cells associated with the phloem or the xylem.

The protein resides in the plastid. It localises to the chloroplast stroma. It carries out the reaction (2R,3S)-3-isopropylmalate = (2S)-2-isopropylmalate. It catalyses the reaction a 2-(omega-methylsulfanyl)alkylmalate = a 2-(omega-methylsulfanyl)alkylmaleate + H2O. The catalysed reaction is 2-(3-methylsulfanyl)propylmalate = 2-(2-methylsulfanyl)propylmaleate + H2O. The enzyme catalyses a 3-(omega-methylsulfanyl)alkylmalate = a 2-(omega-methylsulfanyl)alkylmaleate + H2O. It carries out the reaction 2-(2-methylsulfanyl)ethylmalate = 2-(2-methylsulfanyl)ethylmaleate + H2O. It catalyses the reaction 3-(2-methylsulfanyl)ethylmalate = 2-(2-methylsulfanyl)ethylmaleate + H2O. The catalysed reaction is 3-(3-methylsulfanyl)propylmalate = 2-(2-methylsulfanyl)propylmaleate + H2O. Its pathway is amino-acid biosynthesis; L-leucine biosynthesis; L-leucine from 3-methyl-2-oxobutanoate: step 2/4. In terms of biological role, catalyzes the isomerization between 2-isopropylmalate and 3-isopropylmalate, via the formation of 2-isopropylmaleate. Functions redundantly with LEUD1 in the methionine chain elongation pathway of aliphatic glucosinolate formation. This chain is 3-isopropylmalate dehydratase small subunit 3, found in Arabidopsis thaliana (Mouse-ear cress).